The following is a 437-amino-acid chain: Epsilon-sarcoglycan (437 aa).

Residues 1 to 317 (MQLPRWWELG…LKSRDYYTDF (317 aa)) lie on the Extracellular side of the membrane. The N-linked (GlcNAc...) asparagine glycan is linked to Asn-200. Residues 318–338 (LITLAVPSAVALVLFLILAYI) traverse the membrane as a helical segment. Topologically, residues 339-437 (MCCRREGVEK…QQQTTGKWYP (99 aa)) are cytoplasmic.

This sequence belongs to the sarcoglycan alpha/epsilon family. N-glycosylated. In terms of processing, ubiquitinated, leading to its degradation by the proteasome.

It is found in the cell membrane. Its subcellular location is the sarcolemma. It localises to the cytoplasm. The protein resides in the cytoskeleton. The protein localises to the cell projection. It is found in the dendrite. Its subcellular location is the golgi apparatus. Functionally, component of the sarcoglycan complex, a subcomplex of the dystrophin-glycoprotein complex which forms a link between the F-actin cytoskeleton and the extracellular matrix. The chain is Epsilon-sarcoglycan from Pongo abelii (Sumatran orangutan).